The sequence spans 351 residues: Nicotinate-nucleotide--dimethylbenzimidazole phosphoribosyltransferase (351 aa).

Glu-317 serves as the catalytic Proton acceptor.

Belongs to the CobT family.

The enzyme catalyses 5,6-dimethylbenzimidazole + nicotinate beta-D-ribonucleotide = alpha-ribazole 5'-phosphate + nicotinate + H(+). It functions in the pathway nucleoside biosynthesis; alpha-ribazole biosynthesis; alpha-ribazole from 5,6-dimethylbenzimidazole: step 1/2. Its function is as follows. Catalyzes the synthesis of alpha-ribazole-5'-phosphate from nicotinate mononucleotide (NAMN) and 5,6-dimethylbenzimidazole (DMB). The chain is Nicotinate-nucleotide--dimethylbenzimidazole phosphoribosyltransferase from Pseudomonas putida (strain ATCC 47054 / DSM 6125 / CFBP 8728 / NCIMB 11950 / KT2440).